The sequence spans 517 residues: Gamma-1-syntrophin (517 aa).

Residues 57–140 form the PDZ domain; it reads TVTIRRQTVG…EVTLTVSFLK (84 aa). A PH domain is found at 283–390; that stretch reads QIVYMGWCEA…WERAFQTATF (108 aa).

The protein belongs to the syntrophin family. Interacts with the dystrophin protein DMD and related proteins DTNA and DTNB. Interacts with DGKZ.

It localises to the cytoplasm. The protein localises to the cytoskeleton. It is found in the nucleus. Functionally, adapter protein that binds to and probably organizes the subcellular localization of a variety of proteins. May link various receptors to the actin cytoskeleton and the dystrophin glycoprotein complex. May participate in regulating the subcellular location of diacylglycerol kinase-zeta to ensure that diacylglycerol is rapidly inactivated following receptor activation. The chain is Gamma-1-syntrophin (Sntg1) from Mus musculus (Mouse).